The sequence spans 519 residues: Protein tweety homolog 1 (519 aa).

The Extracellular portion of the chain corresponds to 1–42 (MTFASFLINFYSVIPRLNFKFHWTNDVFNLEWSSEYFQALAL). A helical transmembrane segment spans residues 43–63 (VACLGAAVSLLLLVTIIIVWI). Over 64 to 82 (CQACHKNETTGKTRRRVRR) the chain is Cytoplasmic. The chain crosses the membrane as a helical span at residues 83–103 (LSTVLFIISVLCFFMLGVCLF). The Extracellular segment spans residues 104–217 (ANEHVNRGMS…VLSLYESERW (114 aa)). 3 N-linked (GlcNAc...) asparagine glycosylation sites follow: Asn142, Asn163, and Asn176. The chain crosses the membrane as a helical span at residues 218 to 238 (AFLVILLSITMVVLFTGVVAF). Residues 239–245 (CKQSKKG) lie on the Cytoplasmic side of the membrane. The chain crosses the membrane as a helical span at residues 246–266 (AVVFSAIGFFIFVVVWLLISI). Topologically, residues 267-395 (SLPLTIALAD…GTCNQSVAGM (129 aa)) are extracellular. 4 N-linked (GlcNAc...) asparagine glycosylation sites follow: Asn328, Asn341, Asn348, and Asn389. A helical membrane pass occupies residues 396–416 (SIYMLSILLLGVFLFILLIVV). The Cytoplasmic portion of the chain corresponds to 417–519 (SKTWNLFSRL…YNNYEDRYNM (103 aa)). The tract at residues 459–485 (YNPRTRDRTEPSTNTTSGTADEPNAPL) is disordered.

Belongs to the tweety family.

The protein resides in the cell membrane. In terms of biological role, probable chloride channel. This is Protein tweety homolog 1 (ttyh-1) from Caenorhabditis elegans.